Reading from the N-terminus, the 297-residue chain is MAAPQLFRALVSAQWVAEALKSPRASQPLKLLDASWYLPKLGRDARREFEERHIPGAAFFDIDRCSDHTSPYDHMLPSATHFADYAGSLGVSAATHVVIYDGSDQGLYSAPRVWWMFRAFGHHSVSLLDGGFRYWLSQNLPISSGKSPSEPAEFCAQLDPSFIKTHEDILENLDARRFQVVDARAAGRFQGTQPEPRDGIEPGHIPGSVNIPFTEFLTSEGLEKSPEEIQRLFQEKKVDLSKPLVATCGSGVTACHVVLGAFLCGKPDVPVYDGSWVEWYMRAQPEHVISQGRGKTL.

N-acetylalanine is present on alanine 2. Residues alanine 25–serine 144 enclose the Rhodanese 1 domain. Phosphoserine is present on serine 35. Lysine 40 carries the N6-acetyllysine; alternate modification. Lysine 40 is subject to N6-succinyllysine; alternate. The tract at residues glycine 145–proline 160 is hinge. 2 positions are modified to N6-succinyllysine: lysine 146 and lysine 164. Residues aspartate 174–valine 288 form the Rhodanese 2 domain. Substrate is bound at residue arginine 188. Cysteine 248 serves as the catalytic Cysteine persulfide intermediate.

As to quaternary structure, monomer (active form). Homodimer; disulfide-linked (inactive form). Post-translationally, the N-terminus is blocked. In terms of tissue distribution, expressed in liver, heart, kidney and brain. Localizes to tubular epithelium in the kidney, pericentral hepatocytes in the liver, cardiac cells in the heart and neuroglial cells in the brain. Also expressed in vascular endothelium of the thoracic aorta. Weak expression in lung and thymus.

The protein resides in the cytoplasm. The protein localises to the mitochondrion. Its subcellular location is the synapse. It localises to the synaptosome. The catalysed reaction is 2-oxo-3-sulfanylpropanoate + [thioredoxin]-dithiol = [thioredoxin]-disulfide + hydrogen sulfide + pyruvate + H(+). Its activity is regulated as follows. By oxidative stress, and thioredoxin. Under oxidative stress conditions, the catalytic cysteine site is converted to a sulfenate which inhibits the MPST enzyme activity. Reduced thioredoxin cleaves an intersubunit disulfide bond to turn on the redox switch and reactivate the enzyme. Inhibited by different oxidants, hydrogen peroxide and tetrathionate. Its function is as follows. Transfer of a sulfur ion to cyanide or to other thiol compounds. Also has weak rhodanese activity. Detoxifies cyanide and is required for thiosulfate biosynthesis. Acts as an antioxidant. In combination with cysteine aminotransferase (CAT), contributes to the catabolism of cysteine and is an important producer of hydrogen sulfide in the brain, retina and vascular endothelial cells. Hydrogen sulfide H(2)S is an important synaptic modulator, signaling molecule, smooth muscle contractor and neuroprotectant. Its production by the 3MST/CAT pathway is regulated by calcium ions. In Rattus norvegicus (Rat), this protein is 3-mercaptopyruvate sulfurtransferase (Mpst).